Consider the following 599-residue polypeptide: Proline dehydrogenase 1, mitochondrial (599 aa).

Disordered regions lie at residues 20-39 and 152-180; these read STKP…LRGC and EEAE…EKQY. Residues 23–39 show a composition bias toward low complexity; the sequence is PQAQEQPPASPEALRGC. The span at 153-180 shows a compositional bias: basic and acidic residues; that stretch reads EAERKEMESCTSEAERDGSGANKREKQY. N6-acetyllysine is present on residues Lys-356, Lys-367, and Lys-485.

It belongs to the proline oxidase family. Requires FAD as cofactor. In terms of tissue distribution, expressed in liver, kidney, heart and to a lesser extent in brain, lung and muscle.

It is found in the mitochondrion matrix. The catalysed reaction is L-proline + a quinone = (S)-1-pyrroline-5-carboxylate + a quinol + H(+). It participates in amino-acid degradation; L-proline degradation into L-glutamate; L-glutamate from L-proline: step 1/2. In terms of biological role, converts proline to delta-1-pyrroline-5-carboxylate. In Mus musculus (Mouse), this protein is Proline dehydrogenase 1, mitochondrial (Prodh).